A 395-amino-acid polypeptide reads, in one-letter code: GTPase Obg (395 aa).

An Obg domain is found at 1–159 (MQFVDEASII…RNLRFEMKVM (159 aa)). Positions 128–147 (IHFKSSTNRAPRKTTPGTEG) are disordered. The region spanning 160–333 (ADVGLLGVPN…LVQAAHRWLT (174 aa)) is the OBG-type G domain. GTP contacts are provided by residues 166–173 (GVPNAGKS), 191–195 (FTTLV), 213–216 (DVPG), 283–286 (NKLD), and 314–316 (SAI). Mg(2+) contacts are provided by S173 and T193. Over residues 340–368 (AEDETAFEHEREMRRRMEDEAVARAEARM) the composition is skewed to basic and acidic residues. The segment at 340 to 395 (AEDETAFEHEREMRRRMEDEAVARAEARMSRKRKPAEDDDDDFDEDDYDVEVEYAP) is disordered. The span at 376 to 395 (EDDDDDFDEDDYDVEVEYAP) shows a compositional bias: acidic residues.

This sequence belongs to the TRAFAC class OBG-HflX-like GTPase superfamily. OBG GTPase family. In terms of assembly, monomer. Mg(2+) is required as a cofactor.

It localises to the cytoplasm. Functionally, an essential GTPase which binds GTP, GDP and possibly (p)ppGpp with moderate affinity, with high nucleotide exchange rates and a fairly low GTP hydrolysis rate. Plays a role in control of the cell cycle, stress response, ribosome biogenesis and in those bacteria that undergo differentiation, in morphogenesis control. The polypeptide is GTPase Obg (Chromohalobacter salexigens (strain ATCC BAA-138 / DSM 3043 / CIP 106854 / NCIMB 13768 / 1H11)).